The sequence spans 269 residues: tRNA pseudouridine synthase A (269 aa).

Residue Asp55 is the Nucleophile of the active site. Tyr111 is a binding site for substrate.

Belongs to the tRNA pseudouridine synthase TruA family.

It catalyses the reaction uridine(38/39/40) in tRNA = pseudouridine(38/39/40) in tRNA. Functionally, formation of pseudouridine at positions 38, 39 and 40 in the anticodon stem and loop of transfer RNAs. The polypeptide is tRNA pseudouridine synthase A (Methanosarcina barkeri (strain Fusaro / DSM 804)).